Here is a 396-residue protein sequence, read N- to C-terminus: Elongation factor Tu (396 aa).

The region spanning 10–206 (KPHCNIGTIG…AVDAYIPQPE (197 aa)) is the tr-type G domain. Positions 19 to 26 (GHVDHGKT) are G1. 19–26 (GHVDHGKT) contributes to the GTP binding site. T26 lines the Mg(2+) pocket. Residues 60-64 (GITIS) are G2. The interval 81 to 84 (DCPG) is G3. GTP-binding positions include 81–85 (DCPGH) and 136–139 (NKCD). The G4 stretch occupies residues 136–139 (NKCD). Residues 174–176 (SAL) form a G5 region.

This sequence belongs to the TRAFAC class translation factor GTPase superfamily. Classic translation factor GTPase family. EF-Tu/EF-1A subfamily. In terms of assembly, monomer.

It localises to the cytoplasm. It catalyses the reaction GTP + H2O = GDP + phosphate + H(+). GTP hydrolase that promotes the GTP-dependent binding of aminoacyl-tRNA to the A-site of ribosomes during protein biosynthesis. This chain is Elongation factor Tu, found in Rhodopseudomonas palustris (strain BisB18).